Here is a 254-residue protein sequence, read N- to C-terminus: Alcohol dehydrogenase 1 (254 aa).

10–33 provides a ligand contact to NAD(+); sequence FVAGLGGIGLDTSREIVKSGPKNL. S138 lines the substrate pocket. The active-site Proton acceptor is Y151.

This sequence belongs to the short-chain dehydrogenases/reductases (SDR) family. Homodimer.

The enzyme catalyses a primary alcohol + NAD(+) = an aldehyde + NADH + H(+). The catalysed reaction is a secondary alcohol + NAD(+) = a ketone + NADH + H(+). The sequence is that of Alcohol dehydrogenase 1 (Adh1) from Drosophila montana (Fruit fly).